The chain runs to 197 residues: Imidazoleglycerol-phosphate dehydratase (197 aa).

The protein belongs to the imidazoleglycerol-phosphate dehydratase family.

It is found in the cytoplasm. It carries out the reaction D-erythro-1-(imidazol-4-yl)glycerol 3-phosphate = 3-(imidazol-4-yl)-2-oxopropyl phosphate + H2O. It functions in the pathway amino-acid biosynthesis; L-histidine biosynthesis; L-histidine from 5-phospho-alpha-D-ribose 1-diphosphate: step 6/9. In Azorhizobium caulinodans (strain ATCC 43989 / DSM 5975 / JCM 20966 / LMG 6465 / NBRC 14845 / NCIMB 13405 / ORS 571), this protein is Imidazoleglycerol-phosphate dehydratase.